The sequence spans 724 residues: Acyl-coenzyme A oxidase 2 (724 aa).

The segment at 1–48 is disordered; the sequence is MAMLSQPNDGHDHPEKKDPDTTPKQVAGVISSQDPPHPAKDVAEERAR. 2 stretches are compositionally biased toward basic and acidic residues: residues 9-21 and 37-48; these read DGHD…DPDT and HPAKDVAEERAR.

It belongs to the acyl-CoA oxidase family. FAD is required as a cofactor.

It localises to the peroxisome. It carries out the reaction a 2,3-saturated acyl-CoA + O2 = a (2E)-enoyl-CoA + H2O2. The protein operates within lipid metabolism; peroxisomal fatty acid beta-oxidation. This Candida tropicalis (Yeast) protein is Acyl-coenzyme A oxidase 2 (POX2).